The sequence spans 337 residues: MSKKKETDSYLSSDIKKSKDFKIISNLLKINDAVIVSHYYTTPDIQAITEATGGKVADSLEMAKFGKNHKAKTLLVAGVRFMGETAKILNPEKIVLMPTLKAECSLDLSCPEKEFNKFCDNHPDRTIVVYANTSAAIKARAHWIVTSSIAIDLIDYLDRLGEKIIWAPDKHLGRYIQKQTGADILIWNGTCIVHDEFKSQSLLNMKKIYPKSAILAHPESPENVLNLADFIGSTSQLIQAAKSINQKTIIIATDKGIFFKMQQACPDKILIEAPTSGEGLTCLSCARCPWMKMNNINRIIKSLTNKKKHNEINIPHDLQKKALKPLMRMLKFSQKVI.

2 residues coordinate iminosuccinate: His-38 and Ser-59. Cys-104 lines the [4Fe-4S] cluster pocket. Iminosuccinate-binding positions include 130-132 (YAN) and Ser-147. [4Fe-4S] cluster is bound at residue Cys-191. Residues 217-219 (HPE) and Thr-234 contribute to the iminosuccinate site. Cys-288 provides a ligand contact to [4Fe-4S] cluster.

Belongs to the quinolinate synthase family. Type 1 subfamily. The cofactor is [4Fe-4S] cluster.

It localises to the cytoplasm. It catalyses the reaction iminosuccinate + dihydroxyacetone phosphate = quinolinate + phosphate + 2 H2O + H(+). The protein operates within cofactor biosynthesis; NAD(+) biosynthesis; quinolinate from iminoaspartate: step 1/1. In terms of biological role, catalyzes the condensation of iminoaspartate with dihydroxyacetone phosphate to form quinolinate. The chain is Quinolinate synthase from Wigglesworthia glossinidia brevipalpis.